Consider the following 326-residue polypeptide: L-threo-3-hydroxyaspartate ammonia-lyase (326 aa).

Lys53 is modified (N6-(pyridoxal phosphate)lysine). Pyridoxal 5'-phosphate contacts are provided by residues Asn80, 179-183 (GGGGL), and Ser304.

Belongs to the serine/threonine dehydratase family. Monomer. Pyridoxal 5'-phosphate is required as a cofactor. It depends on Mn(2+) as a cofactor. Requires Mg(2+) as cofactor. Ca(2+) serves as cofactor.

It catalyses the reaction (3S)-3-hydroxy-L-aspartate = oxaloacetate + NH4(+). With respect to regulation, is strongly inhibited by hydroxylamine and EDTA in vitro. Catalyzes the deamination of L-threo-3-hydroxyaspartate to oxaloacetate and ammonia. Shows a high specificity towards L-threo-3-hydroxyaspartate as other 3-hydroxyaminoacids, i.e. D,L-erythro- and D-threo-3-hydroxyaspartate, D-threonine, L-threonine, D,L-allothreonine, D-serine, and L-serine, are not substrates for this enzyme. Exhibits no detectable serine racemase activity. Is responsible for the 3-hydroxyaspartate resistance of S.cerevisiae, and thus may be involved in the detoxification of naturally occurring 3-hydroxyaspartate. This is L-threo-3-hydroxyaspartate ammonia-lyase (SRY1) from Saccharomyces cerevisiae (strain ATCC 204508 / S288c) (Baker's yeast).